The sequence spans 177 residues: Small ribosomal subunit protein mS23 (177 aa).

Alanine 2 bears the N-acetylalanine mark. Lysine 83 is modified (N6-succinyllysine). N6-acetyllysine is present on lysine 102. The tract at residues 145–177 (LQASSEGHEPQEDDDLAQRGQVKQEPETAPSPP) is disordered.

This sequence belongs to the mitochondrion-specific ribosomal protein mS23 family. Component of the mitochondrial ribosome small subunit (28S) which comprises a 12S rRNA and about 30 distinct proteins.

Its subcellular location is the mitochondrion. This Mus musculus (Mouse) protein is Small ribosomal subunit protein mS23.